The following is a 279-amino-acid chain: MLTLGEALRDATATLERAGVASPLVDARLIAAHLLGCGPLDIALRMRDEVPAGFAAAVERRARREPLQHILGTAPMGPLDLHVGPGVFIPRPETEVLADWAVRQVAGDVEKRKIVDLCTGSGALAAYIGHALIDATLYAVELDPGAATWAQRNFDEFAPQVKLIHGDVTDPTLLAEVHGTIDLVVSNPPYVPESDDLDPEVYQDPHMAVFSGADGMDVINKMVHLIFNLLKSGGAVGIEHDDTTSDAVRQVFSQHGGFGTIEVLHDLTGRARFVTARKL.

Residues Glu-141 and Asn-187 each coordinate S-adenosyl-L-methionine. 187 to 190 (NPPY) is a binding site for substrate.

This sequence belongs to the protein N5-glutamine methyltransferase family. PrmC subfamily.

The catalysed reaction is L-glutaminyl-[peptide chain release factor] + S-adenosyl-L-methionine = N(5)-methyl-L-glutaminyl-[peptide chain release factor] + S-adenosyl-L-homocysteine + H(+). In terms of biological role, methylates the class 1 translation termination release factors RF1/PrfA and RF2/PrfB on the glutamine residue of the universally conserved GGQ motif. The protein is Release factor glutamine methyltransferase of Corynebacterium glutamicum (strain ATCC 13032 / DSM 20300 / JCM 1318 / BCRC 11384 / CCUG 27702 / LMG 3730 / NBRC 12168 / NCIMB 10025 / NRRL B-2784 / 534).